The primary structure comprises 212 residues: Ribosomal RNA small subunit methyltransferase G (212 aa).

S-adenosyl-L-methionine-binding positions include Gly75, Leu80, 126–127, and Arg141; that span reads AQ.

It belongs to the methyltransferase superfamily. RNA methyltransferase RsmG family.

The protein resides in the cytoplasm. Functionally, specifically methylates the N7 position of guanine in position 518 of 16S rRNA. In Beutenbergia cavernae (strain ATCC BAA-8 / DSM 12333 / CCUG 43141 / JCM 11478 / NBRC 16432 / NCIMB 13614 / HKI 0122), this protein is Ribosomal RNA small subunit methyltransferase G.